Consider the following 386-residue polypeptide: Succinyl-diaminopimelate desuccinylase (386 aa).

His-73 is a Zn(2+) binding site. Asp-75 is an active-site residue. Position 106 (Asp-106) interacts with Zn(2+). Glu-140 functions as the Proton acceptor in the catalytic mechanism. Zn(2+) contacts are provided by Glu-141, Glu-169, and His-355.

Belongs to the peptidase M20A family. DapE subfamily. In terms of assembly, homodimer. Zn(2+) is required as a cofactor. Requires Co(2+) as cofactor.

It catalyses the reaction N-succinyl-(2S,6S)-2,6-diaminopimelate + H2O = (2S,6S)-2,6-diaminopimelate + succinate. The protein operates within amino-acid biosynthesis; L-lysine biosynthesis via DAP pathway; LL-2,6-diaminopimelate from (S)-tetrahydrodipicolinate (succinylase route): step 3/3. Functionally, catalyzes the hydrolysis of N-succinyl-L,L-diaminopimelic acid (SDAP), forming succinate and LL-2,6-diaminopimelate (DAP), an intermediate involved in the bacterial biosynthesis of lysine and meso-diaminopimelic acid, an essential component of bacterial cell walls. The protein is Succinyl-diaminopimelate desuccinylase of Delftia acidovorans (strain DSM 14801 / SPH-1).